The sequence spans 688 residues: Sodium channel and clathrin linker 1 (688 aa).

Ala2 carries the post-translational modification N-acetylalanine. The stretch at 69–673 forms a coiled coil; that stretch reads ELNGQLKYYQ…SASQQLSVIT (605 aa). A Phosphoserine modification is found at Ser681.

In terms of assembly, interacts with SCN10A and clathrin. Identified in a complex containing SCN10A, clathrin and SCLT1.

It is found in the cytoplasm. The protein resides in the cytoskeleton. The protein localises to the microtubule organizing center. Its subcellular location is the centrosome. It localises to the centriole. In terms of biological role, adapter protein that links SCN10A to clathrin. Regulates SCN10A channel activity, possibly by promoting channel internalization. The chain is Sodium channel and clathrin linker 1 (SCLT1) from Homo sapiens (Human).